Consider the following 430-residue polypeptide: MPQLKVLINGGGIAGNAIAFWLTKLGHDVTVLERFPALRTTGLQLDLRGHGIEVLKRMGLDDAMKAKVIKEDGAQFVDTNGKVVAYFPAVDTSKGGVQAFTSEYEIMRGDICRVFYAATKDRATYKFGTSVESFEDLGDSIKVQLTDHTVDHYDLLIGADGVTSSIRKMMLGPGVPDKFIQFQNLYASYFTIPAPIKPDEKYMANIFIAPGSKLLMTRRDNPERLQVYMGGKAPGARLENARRGDTAEEKLGIEEFMQGCGWRTSEMIDELRKADDFYLERLGMVKLDSWHRGRVALVGEAAWCSSVLTGMGTTSCLVGAYCLAGEIAKHCGRGDQGEAKDDPMMVQKNLANALAGYEEKFMPFMHQVQDGLSAKTGTRTYMPSSQWGVTILNWVIKIIALLRLNMAGDWVIREAVRNWKLPDYPELLKE.

FAD-binding positions include 11 to 14 (GGIA), 33 to 34 (ER), Arg108, and Tyr278.

The protein belongs to the aromatic-ring hydroxylase family. Requires FAD as cofactor.

It participates in secondary metabolite biosynthesis; terpenoid biosynthesis. Its function is as follows. Flavin-dependent monooxygenase; part of the gene cluster that mediates the biosynthesis of xenovulene A, an unusual meroterpenoid that has potent inhibitory effects on the human gamma-aminobutyrate A (GABAA) benzodiazepine receptor. The first step of xenovulene A biosynthesis is the biosynthesis of 3-methylorcinaldehyde performed by the non-reducing polyketide synthase aspks1. The salicylate hydroxylase asL1 then catalyzes the oxidative dearomatization of 3-methylorcinaldehyde to yield a dearomatized hydroxycyclohexadione. The 2-oxoglutarate-dependent dioxygenase asL3 further catalyzes the oxidative ring expansion to provide the first tropolone metabolite. The cytochrome P450 monooxygenase asR2 allows the synthesis of tropolone hemiacetal. In parallel, a previously unrecognised class of terpene cyclase, asR6, produces alpha-humulene from farnesylpyrophosphate (FPP). The putative Diels-Alderase asR5 probably catalyzes the formation of the tropolone-humulene skeleton by linking humulene and the polyketide moiety. Oxidative-ring contractions catalyzed by asL4 and asL6 then processively remove carbon atoms from the polyketide to yield xenovulene A. In Sarocladium schorii (Acremonium strictum (strain IMI 501407)), this protein is FAD-dependent monooxygenase asL4.